The following is a 395-amino-acid chain: Dual specificity protein phosphatase 4 (395 aa).

Residue valine 2 is modified to N-acetylvaline. Positions 42–160 (SGGKCLLLDC…FSSEYPEFCS (119 aa)) constitute a Rhodanese domain. Residues 196 to 337 (GPVEILPFLY…LLQFESQVLT (142 aa)) enclose the Tyrosine-protein phosphatase domain. Residue cysteine 281 is the Phosphocysteine intermediate of the active site. Phosphoserine; by MAPK occurs at positions 387 and 392.

This sequence belongs to the protein-tyrosine phosphatase family. Non-receptor class dual specificity subfamily. Hollow spherical complex composed of 24 subunits with pseudooctahedral symmetry, has a tetramer as the basic unit. Phosphorylation in the C-terminus by ERK1/2 inhibits proteasomal degradation and stabilizes the protein. In terms of tissue distribution, expressed at moderate levels in nearly all tissues and cells including brain, spleen, and testes with the higher expression in the heart and lung and lower expression in skeletal muscle and kidney. Undetectable in liver. Expressed in many areas of the brain with very strong expression in the hippocampus, piriform cortex, and the suprachiasmatic nucleus.

The protein resides in the nucleus. The catalysed reaction is O-phospho-L-tyrosyl-[protein] + H2O = L-tyrosyl-[protein] + phosphate. It carries out the reaction O-phospho-L-seryl-[protein] + H2O = L-seryl-[protein] + phosphate. It catalyses the reaction O-phospho-L-threonyl-[protein] + H2O = L-threonyl-[protein] + phosphate. Functionally, regulates mitogenic signal transduction by dephosphorylating both Thr and Tyr residues on MAP kinases ERK1 and ERK2. This chain is Dual specificity protein phosphatase 4 (Dusp4), found in Rattus norvegicus (Rat).